The chain runs to 520 residues: Polycomb protein PHO (520 aa).

C2H2-type zinc fingers lie at residues 357 to 381 (IACP…LHTH), 386 to 408 (HVCA…QLVH), 414 to 438 (FQCT…VRIH), and 444 to 468 (FVCP…ILTH). The interval 475–497 (TSISGKSGCSNAESNSQSEDTSA) is disordered.

Component of the Esc/E(z) complex, composed of Esc, E(z), Su(z)12, HDAC1/Rpd3 and Caf1-55. This complex is distinct from the PRC1 complex, which contains many other PcG proteins like Pc, Ph, Psc, Su(z)2. The two complexes however cooperate and interact together during the first 3 hours of development to establish PcG silencing. Component of the chromatin remodeling Ino80 complex. Interacts with Sfmbt to form a pho-repressive complex (PhoRC).

Its subcellular location is the nucleus. Functionally, polycomb group (PcG) protein that binds to the 5'-CNGCCATNNNNG-3' sequence found in the regulatory regions of many genes. PcG proteins act by forming multiprotein complexes, which are required to maintain the transcriptionally repressive state of homeotic genes throughout development. PcG proteins are not required to initiate repression, but to maintain it during later stages of development. They probably act via the methylation of histones, rendering chromatin heritably changed in its expressibility. Probably targets the Esc/E(z) complex to DNA. Necessary but not sufficient to recruit a functional PcG repressive complex that represses target genes, suggesting that the recruitment of the distinct PRC1 complex is also required to allow a subsequent repression. Its function is as follows. Proposed core component of the chromatin remodeling Ino80 complex which is involved in transcriptional regulation, DNA replication and probably DNA repair. This is Polycomb protein PHO (pho) from Drosophila melanogaster (Fruit fly).